Here is a 438-residue protein sequence, read N- to C-terminus: Neutral metalloprotease ShpI (438 aa).

Residues 1 to 26 form the signal peptide; it reads MINKKKLVTSLVTSSLLATFTLGSFA. Positions 27–101 are excised as a propeptide; sequence DAHTYIINNE…KSENALSNSK (75 aa). His-242 contributes to the Zn(2+) binding site. The active site involves Glu-243. Zn(2+)-binding residues include His-246 and Glu-269.

Belongs to the peptidase M30 family. Zn(2+) serves as cofactor. Post-translationally, several different N-terminal ends may be produced, the favored N-terminus is position 102.

The protein resides in the secreted. With respect to regulation, inhibited by metal- and zinc-specific inhibitors, such as EDTA and 1,10-phenanthroline in vitro. Is resistant to all inhibitors of serine, cysteine and aspartic proteases. Protease that has a low substrate specificity. Catalyzes the hydrolysis of glucagon, melittin and oxidized beta-insulin at various positions in vitro. Is not able to cleave elastin or the synthetic substrates FAGLA (a substrate for neutral proteinases) and FALGPA (a substrate for collagenase). This Staphylococcus hyicus protein is Neutral metalloprotease ShpI.